A 262-amino-acid polypeptide reads, in one-letter code: Shikimate dehydrogenase (NADP(+)) (262 aa).

Residues 15–17 (SRS) and Thr-62 contribute to the shikimate site. Lys-66 acts as the Proton acceptor in catalysis. Residue Glu-78 participates in NADP(+) binding. 2 residues coordinate shikimate: Asn-87 and Asp-102. Residues 126 to 130 (GAGGA), 150 to 155 (NRTQQR), and Met-214 contribute to the NADP(+) site. Tyr-216 is a shikimate binding site. Gly-236 serves as a coordination point for NADP(+).

The protein belongs to the shikimate dehydrogenase family. As to quaternary structure, homodimer.

The enzyme catalyses shikimate + NADP(+) = 3-dehydroshikimate + NADPH + H(+). The protein operates within metabolic intermediate biosynthesis; chorismate biosynthesis; chorismate from D-erythrose 4-phosphate and phosphoenolpyruvate: step 4/7. Functionally, involved in the biosynthesis of the chorismate, which leads to the biosynthesis of aromatic amino acids. Catalyzes the reversible NADPH linked reduction of 3-dehydroshikimate (DHSA) to yield shikimate (SA). In Acinetobacter baylyi (strain ATCC 33305 / BD413 / ADP1), this protein is Shikimate dehydrogenase (NADP(+)).